The chain runs to 479 residues: NADH dehydrogenase [ubiquinone] flavoprotein 1, mitochondrial (479 aa).

103 to 112 (GRGGAGFPSG) provides a ligand contact to NADH. 216–264 (RGAGAYICGEETALIESIEGKQGKPRLKPPFPAMAGLYGCPTTVTNVET) serves as a coordination point for FMN. Cys396, Cys399, Cys402, and Cys442 together coordinate [4Fe-4S] cluster.

Belongs to the complex I 51 kDa subunit family. As to quaternary structure, complex I is composed of about 45 different subunits. This is a component of the flavoprotein-sulfur (FP) fragment of the enzyme. Requires FMN as cofactor. It depends on [4Fe-4S] cluster as a cofactor.

The protein resides in the mitochondrion inner membrane. The catalysed reaction is a ubiquinone + NADH + 5 H(+)(in) = a ubiquinol + NAD(+) + 4 H(+)(out). Its function is as follows. Core subunit of the mitochondrial membrane respiratory chain NADH dehydrogenase (Complex I) that is believed to belong to the minimal assembly required for catalysis. Complex I functions in the transfer of electrons from NADH to the respiratory chain. The immediate electron acceptor for the enzyme is believed to be ubiquinone. The protein is NADH dehydrogenase [ubiquinone] flavoprotein 1, mitochondrial (ndufv1) of Dictyostelium discoideum (Social amoeba).